A 320-amino-acid polypeptide reads, in one-letter code: Short-chain dehydrogenase/reductase ARMGADRAFT_1169971 (320 aa).

The helical transmembrane segment at 19–39 (KVAVVTGANSGIGLYILFHVA) threads the bilayer. Positions 30, 78, 105, and 136 each coordinate NADP(+). An N-linked (GlcNAc...) asparagine glycan is attached at Asn157. The Proton donor role is filled by Ser159. NADP(+) contacts are provided by Tyr192, Lys196, Val227, and Ser229. Residue Tyr192 is the Proton acceptor of the active site. Lys196 (lowers pKa of active site Tyr) is an active-site residue. The helical transmembrane segment at 235-255 (LFTSLMFGTIINWVFSLFFIS) threads the bilayer.

It belongs to the short-chain dehydrogenases/reductases (SDR) family.

Its subcellular location is the membrane. The protein operates within secondary metabolite biosynthesis. Its function is as follows. Short-chain dehydrogenase/reductase, part of the gene cluster that mediates the biosynthesis of melleolides, a range of antifungal and phytotoxic polyketide derivatives composed of an orsellinic acid (OA) moiety esterified to various sesquiterpene alcohols. The first step in melleolides biosynthesis is performed by the delta(6)-protoilludene synthase PRO1 which catalyzes the cyclization of farnesyl diphosphate to protoilludene. The orsellinic acid synthase armB produces OA by condensing acetyl-CoA with 3 malonyl-CoA units in a three-round chain elongation reaction folowed by a C2-C7 ring closure. ArmB further catalyzes the trans-esterification of OA to the various sesquiterpene alcohols resulting from the hydroxylation of protoilludene. The melleolides cluster also includes 5 cytochrome P450 monooxygenases, 4 NAD(+)-dependent oxidoreductases, one flavin-dependent oxidoreductase, and one O-methyltransferase. The cytochrome P450 monooxygenases may be involved in protoilludene hydroxylation to elaborate melleolides with multiple alcohol groups, such as melleolide D, which carries alcohol functionalities at C-4, C-5, C-10, and C-13. The role of the NAD(+)-dependent enzymes remains unknown. Numerous melleolides, including arnamial, show 5'-O-methylation of the aromatic moiety which may be catalyzed by the methyltransferase encoded in the cluster. The flavin-dependent oxidoreductase might represent the dehydrogenase yielding the aldehyde in position 1 of arnamial and other melleolides. Finally, several halogenase localized outside of the cluster, are able to catalyze the transfer of a single chlorine atom to the melleolide backbone, resulting in a 6'-chloromelleolide product. This is Short-chain dehydrogenase/reductase ARMGADRAFT_1169971 from Armillaria gallica (Bulbous honey fungus).